The chain runs to 338 residues: DNA-directed RNA polymerase subunit alpha (338 aa).

The alpha N-terminal domain (alpha-NTD) stretch occupies residues 1 to 234 (MIERNWNELI…DQLQIFITFE (234 aa)). An alpha C-terminal domain (alpha-CTD) region spans residues 250 to 338 (FNPALLKKVD…DLAKKFEDQI (89 aa)).

The protein belongs to the RNA polymerase alpha chain family. As to quaternary structure, homodimer. The RNAP catalytic core consists of 2 alpha, 1 beta, 1 beta' and 1 omega subunit. When a sigma factor is associated with the core the holoenzyme is formed, which can initiate transcription.

It carries out the reaction RNA(n) + a ribonucleoside 5'-triphosphate = RNA(n+1) + diphosphate. Its function is as follows. DNA-dependent RNA polymerase catalyzes the transcription of DNA into RNA using the four ribonucleoside triphosphates as substrates. This is DNA-directed RNA polymerase subunit alpha from Caulobacter sp. (strain K31).